Reading from the N-terminus, the 884-residue chain is DNA mismatch repair protein MutS (884 aa).

601–608 (GPNMSGKS) is a binding site for ATP. The interval 826–845 (ESQLSFFGGEQSSKKQDKPL) is disordered.

It belongs to the DNA mismatch repair MutS family.

Its function is as follows. This protein is involved in the repair of mismatches in DNA. It is possible that it carries out the mismatch recognition step. This protein has a weak ATPase activity. The sequence is that of DNA mismatch repair protein MutS from Bacillus cereus (strain ATCC 14579 / DSM 31 / CCUG 7414 / JCM 2152 / NBRC 15305 / NCIMB 9373 / NCTC 2599 / NRRL B-3711).